We begin with the raw amino-acid sequence, 95 residues long: Protein ECS1 (95 aa).

The signal sequence occupies residues 1–27 (MASSIVSSMFLFLLLLLVFPHIDNVLG).

Expressed in leaves, flowers and stems, but not in roots.

It is found in the secreted. Its subcellular location is the cell wall. In terms of biological role, maybe involved in defense responses to X.campestris, but probably not a X.campestris pv. campestris race 750 (e.g. Xcc750) resistance gene; according to genetic data, linked to a locus influencing resistance to Xcc750. In Arabidopsis thaliana (Mouse-ear cress), this protein is Protein ECS1.